The primary structure comprises 69 residues: Putative membrane protein insertion efficiency factor (69 aa).

The protein belongs to the UPF0161 family.

The protein resides in the cell membrane. Could be involved in insertion of integral membrane proteins into the membrane. In Clostridium kluyveri (strain NBRC 12016), this protein is Putative membrane protein insertion efficiency factor.